Reading from the N-terminus, the 224-residue chain is CRIB domain-containing protein RIC1 (224 aa).

The region spanning 29 to 42 (IGFPTDVKHVAHIG) is the CRIB domain. A disordered region spans residues 38-224 (VAHIGSDGPT…SVDTTCNDII (187 aa)). Composition is skewed to polar residues over residues 69–84 (SRGNSNKYNPQGTNQR), 114–132 (PNHNGSPPRKSSGNAASSD), 144–155 (AHGSTDSSNDQE), and 215–224 (SVDTTCNDII).

As to quaternary structure, interacts with ARAC11/ROP1. As to expression, expressed in columella cells from the root tip and epidermal cells at the base of lateral roots, leaves, stems, flowers, anthers, pollen and siliques.

It is found in the cytoplasm. Its subcellular location is the cytoskeleton. In terms of biological role, functions as a downstream effector of Rho-related GTP binding proteins of the 'Rho of Plants' (ROPs) family. Participates in the propagation of ROP GTPase signals in specific cellular responses. Required for cortical microtubule organization. Promotes microtubule bundling and formation of well-ordered microtubule arrays in the neck region of pavement cells. This restricts cell lateral expansion to generate the narrow neck morphology of pavement cells. Its function is inhibited when it interacts with activated ARAC4/ROP2. Represses ARAC4/ROP2 activation and antagonizes the RIC4-actin pathway that promotes the assembly of cortical actin microfilaments. Acts as a downstream effector of ARAC3/ROP6 which functions in a signaling pathway that negatively regulates clathrin-mediated endocytosis and internalization of PIN1 and PIN2. Required for the asymmetric auxin distribution during root gravitropism and vascular patterning. Positively regulates auxin responses, but negatively regulates ABA responses during lateral root development and primary root elongation. The protein is CRIB domain-containing protein RIC1 (RIC1) of Arabidopsis thaliana (Mouse-ear cress).